Reading from the N-terminus, the 501-residue chain is Ribose import ATP-binding protein RbsA (501 aa).

2 ABC transporter domains span residues 6–242 (LQLS…VGRK) and 253–495 (VHGQ…VGKK). 38 to 45 (GENGAGKS) lines the ATP pocket.

Belongs to the ABC transporter superfamily. Ribose importer (TC 3.A.1.2.1) family. The complex is composed of an ATP-binding protein (RbsA), two transmembrane proteins (RbsC) and a solute-binding protein (RbsB).

The protein resides in the cell inner membrane. The catalysed reaction is D-ribose(out) + ATP + H2O = D-ribose(in) + ADP + phosphate + H(+). Its function is as follows. Part of the ABC transporter complex RbsABC involved in ribose import. Responsible for energy coupling to the transport system. This Vibrio vulnificus (strain YJ016) protein is Ribose import ATP-binding protein RbsA.